The chain runs to 994 residues: Sarcoplasmic/endoplasmic reticulum calcium ATPase 1 (994 aa).

The Cytoplasmic portion of the chain corresponds to 1-48 (MEQAHTKTTEECLAYFGVNENTGLSLDQVKKNFDKFGPNELPAEEGKS). The helical transmembrane segment at 49-69 (LWELVAEQFEDLLVRILLLAA) threads the bilayer. At 70–89 (IISFVLAWFEEGEETVTAFV) the chain is on the lumenal side. Residues 90-110 (EPFVILLILIANAVVGVWQER) traverse the membrane as a helical segment. Topologically, residues 111-253 (NAEDAIEALK…QEKTPLQQKL (143 aa)) are cytoplasmic. Residues 254-273 (DEFGEQLSKVISLICVAVWL) form a helical membrane-spanning segment. Over 274–295 (INIGHFNDPIHGGSWIKGAIYY) the chain is Lumenal. The helical transmembrane segment at 296-313 (FKIAVALAVAAIPEGLPA) threads the bilayer. Positions 304, 305, 307, and 309 each coordinate Ca(2+). Over 314-757 (VITTCLALGT…EEGRAIYNNM (444 aa)) the chain is Cytoplasmic. Residue Asp-351 is the 4-aspartylphosphate intermediate of the active site. Asp-351 and Thr-353 together coordinate Mg(2+). Thr-353, Glu-442, Arg-489, Lys-515, Arg-560, Thr-625, Gly-626, Asp-627, Arg-678, and Lys-684 together coordinate ATP. Residue Asp-703 participates in Mg(2+) binding. Asn-706 contributes to the ATP binding site. Residues 758–777 (KQFIRYLISSNVGEVVCIFL) form a helical membrane-spanning segment. Positions 768 and 771 each coordinate Ca(2+). Residues 778 to 787 (TAALGLPEAL) lie on the Lumenal side of the membrane. The chain crosses the membrane as a helical span at residues 788–808 (IPVQLLWVNLVTDGLPATALG). The segment at 788-808 (IPVQLLWVNLVTDGLPATALG) is interaction with PLN. Asn-796, Thr-799, and Asp-800 together coordinate Ca(2+). Topologically, residues 809 to 828 (FNPPDLDIMDRPPRSPKEPL) are cytoplasmic. Residues 829–851 (ISGWLFFRYMAIGGYVGAATVGA) traverse the membrane as a helical segment. Topologically, residues 852–897 (AAWWFMYADDGPNVTFYQLSHFMQCTEDNPDFEGHECEIFESPVPM) are lumenal. Cys-876 and Cys-888 are oxidised to a cystine. A helical membrane pass occupies residues 898–917 (TMALSVLVTIEMCNALNSLS). Ca(2+) is bound at residue Glu-908. The Cytoplasmic portion of the chain corresponds to 918–930 (ENQSLIRMPPWSN). A helical transmembrane segment spans residues 931–949 (FWLLGSICLSMSLHFLILY). Positions 932-943 (WLLGSICLSMSL) are interaction with PLN. Over 950–964 (VEPLPMIFKLTPLNV) the chain is Lumenal. A helical membrane pass occupies residues 965 to 985 (EQWFIVLKMSFPVILLDELLK). Over 986-994 (FVARNYLEG) the chain is Cytoplasmic.

This sequence belongs to the cation transport ATPase (P-type) (TC 3.A.3) family. Type IIA subfamily. As to quaternary structure, interacts with sarcolipin (SLN). Interacts with phospholamban (PLN). Interacts with myoregulin (MRLN). Interacts with DWORF. Interacts with VMP1. Mg(2+) serves as cofactor.

It localises to the endoplasmic reticulum membrane. The protein localises to the sarcoplasmic reticulum membrane. It catalyses the reaction Ca(2+)(in) + ATP + H2O = Ca(2+)(out) + ADP + phosphate + H(+). Its activity is regulated as follows. Inhibited by sarcolipin (SLN) and myoregulin (MRLN). Also shown to be inhibited by phospholamban (PLN) in vitro. Enhanced by DWORF; DWORF increases activity by displacing sarcolipin (SLN), phospholamban (PLN) and myoregulin (MRLN). Its function is as follows. Key regulator of striated muscle performance by acting as the major Ca(2+) ATPase responsible for the reuptake of cytosolic Ca(2+) into the sarcoplasmic reticulum. Catalyzes the hydrolysis of ATP coupled with the translocation of calcium from the cytosol to the sarcoplasmic reticulum lumen. Contributes to calcium sequestration involved in muscular excitation/contraction. The sequence is that of Sarcoplasmic/endoplasmic reticulum calcium ATPase 1 (ATP2A1) from Pelophylax lessonae (Pool frog).